Reading from the N-terminus, the 370-residue chain is Neutral protease 2 homolog AFUA_4G13750 (370 aa).

An N-terminal signal peptide occupies residues methionine 1–alanine 19. Residues leucine 20 to arginine 172 constitute a propeptide that is removed on maturation. Disulfide bonds link cysteine 178-cysteine 250 and cysteine 257-cysteine 275. Histidine 300 is a binding site for Zn(2+). Glutamate 301 is an active-site residue. The Zn(2+) site is built by histidine 304 and aspartate 315.

This sequence belongs to the peptidase M35 family. The cofactor is Zn(2+).

The protein localises to the secreted. It catalyses the reaction Preferential cleavage of bonds with hydrophobic residues in P1'. Also 3-Asn-|-Gln-4 and 8-Gly-|-Ser-9 bonds in insulin B chain.. Its function is as follows. Secreted metalloproteinase that allows assimilation of proteinaceous substrates. Shows high activities on basic nuclear substrates such as histone and protamine. May be involved in virulence. This Aspergillus fumigatus (strain ATCC MYA-4609 / CBS 101355 / FGSC A1100 / Af293) (Neosartorya fumigata) protein is Neutral protease 2 homolog AFUA_4G13750.